The following is a 188-amino-acid chain: Peptidyl-tRNA hydrolase (188 aa).

Y14 contributes to the tRNA binding site. H19 (proton acceptor) is an active-site residue. Y64, N66, and N112 together coordinate tRNA.

This sequence belongs to the PTH family. As to quaternary structure, monomer.

It localises to the cytoplasm. It catalyses the reaction an N-acyl-L-alpha-aminoacyl-tRNA + H2O = an N-acyl-L-amino acid + a tRNA + H(+). Its function is as follows. Hydrolyzes ribosome-free peptidyl-tRNAs (with 1 or more amino acids incorporated), which drop off the ribosome during protein synthesis, or as a result of ribosome stalling. In terms of biological role, catalyzes the release of premature peptidyl moieties from peptidyl-tRNA molecules trapped in stalled 50S ribosomal subunits, and thus maintains levels of free tRNAs and 50S ribosomes. The chain is Peptidyl-tRNA hydrolase from Clostridium tetani (strain Massachusetts / E88).